Consider the following 366-residue polypeptide: Ribosomal RNA large subunit methyltransferase M (366 aa).

Residues Ser188, 221-224 (CPGG), Asp240, Asp260, and Asp277 contribute to the S-adenosyl-L-methionine site. Lys306 acts as the Proton acceptor in catalysis.

This sequence belongs to the class I-like SAM-binding methyltransferase superfamily. RNA methyltransferase RlmE family. RlmM subfamily. As to quaternary structure, monomer.

It localises to the cytoplasm. It catalyses the reaction cytidine(2498) in 23S rRNA + S-adenosyl-L-methionine = 2'-O-methylcytidine(2498) in 23S rRNA + S-adenosyl-L-homocysteine + H(+). Its function is as follows. Catalyzes the 2'-O-methylation at nucleotide C2498 in 23S rRNA. The polypeptide is Ribosomal RNA large subunit methyltransferase M (Photorhabdus asymbiotica subsp. asymbiotica (strain ATCC 43949 / 3105-77) (Xenorhabdus luminescens (strain 2))).